Consider the following 35-residue polypeptide: Photosystem II reaction center protein M (35 aa).

The helical transmembrane segment at 7-27 threads the bilayer; that stretch reads GFIASILFVLVPTVFLLILFI.

The protein belongs to the PsbM family. PSII is composed of 1 copy each of membrane proteins PsbA, PsbB, PsbC, PsbD, PsbE, PsbF, PsbH, PsbI, PsbJ, PsbK, PsbL, PsbM, PsbT, PsbX, PsbY, PsbZ, Psb30/Ycf12, peripheral proteins PsbO, CyanoQ (PsbQ), PsbU, PsbV and a large number of cofactors. It forms dimeric complexes.

It localises to the cellular thylakoid membrane. Functionally, one of the components of the core complex of photosystem II (PSII). PSII is a light-driven water:plastoquinone oxidoreductase that uses light energy to abstract electrons from H(2)O, generating O(2) and a proton gradient subsequently used for ATP formation. It consists of a core antenna complex that captures photons, and an electron transfer chain that converts photonic excitation into a charge separation. This subunit is found at the monomer-monomer interface. The chain is Photosystem II reaction center protein M from Microcystis aeruginosa (strain NIES-843 / IAM M-2473).